Consider the following 62-residue polypeptide: Guanine nucleotide-binding protein subunit gamma (62 aa).

The residue at position 59 (cysteine 59) is a Cysteine methyl ester. Residue cysteine 59 is the site of S-geranylgeranyl cysteine attachment. A propeptide spans 60–62 (SVL) (removed in mature form).

This sequence belongs to the G protein gamma family. In terms of assembly, g proteins are composed of 3 units, alpha, beta and gamma. Interacts with gpb-1 and gpb-2.

It is found in the cell membrane. Guanine nucleotide-binding proteins (G proteins) are involved as a modulator or transducer in various transmembrane signaling systems. The beta and gamma chains are required for the GTPase activity, for replacement of GDP by GTP, and for G protein-effector interaction. This is Guanine nucleotide-binding protein subunit gamma (gpc-1) from Caenorhabditis briggsae.